A 687-amino-acid polypeptide reads, in one-letter code: Ribosomal RNA processing protein 1 homolog (687 aa).

Over residues 288 to 298 the composition is skewed to acidic residues; it reads DEEDDEVNAEE. Disordered stretches follow at residues 288-312 and 463-624; these read DEED…RAGN and VKEA…GSGK. Basic and acidic residues-rich tracts occupy residues 463 to 488, 497 to 520, and 527 to 543; these read VKEA…DQTK, PKND…EEPA, and HSKT…DEQP. Over residues 554–564 the composition is skewed to low complexity; that stretch reads KAKPTPKTKAA. Polar residues predominate over residues 596 to 608; that stretch reads KQANSKLPQSTPK. 2 positions are modified to phosphothreonine: threonine 617 and threonine 620. Serine 622 carries the post-translational modification Phosphoserine.

It belongs to the RRP1 family.

It localises to the nucleus. Its function is as follows. May be involved in the generation of 28S rRNA. The polypeptide is Ribosomal RNA processing protein 1 homolog (Nnp-1) (Drosophila melanogaster (Fruit fly)).